Here is a 210-residue protein sequence, read N- to C-terminus: Large ribosomal subunit protein uL3 (210 aa).

Belongs to the universal ribosomal protein uL3 family. In terms of assembly, part of the 50S ribosomal subunit. Forms a cluster with proteins L14 and L19.

One of the primary rRNA binding proteins, it binds directly near the 3'-end of the 23S rRNA, where it nucleates assembly of the 50S subunit. This Pediococcus pentosaceus (strain ATCC 25745 / CCUG 21536 / LMG 10740 / 183-1w) protein is Large ribosomal subunit protein uL3.